Reading from the N-terminus, the 358-residue chain is Peptide chain release factor 1 (358 aa).

At Gln233 the chain carries N5-methylglutamine.

It belongs to the prokaryotic/mitochondrial release factor family. In terms of processing, methylated by PrmC. Methylation increases the termination efficiency of RF1.

The protein resides in the cytoplasm. Functionally, peptide chain release factor 1 directs the termination of translation in response to the peptide chain termination codons UAG and UAA. This chain is Peptide chain release factor 1, found in Staphylococcus aureus (strain MSSA476).